The chain runs to 226 residues: Phosphoglycolate phosphatase (226 aa).

Residue Asp9 is the Nucleophile of the active site. Positions 9 and 11 each coordinate Mg(2+). Lys150 provides a ligand contact to substrate. Mg(2+)-binding residues include Asp173 and Asp177.

It belongs to the archaeal SPP-like hydrolase family. Mg(2+) is required as a cofactor.

The enzyme catalyses 2-phosphoglycolate + H2O = glycolate + phosphate. Its function is as follows. Catalyzes the dephosphorylation of 2-phosphoglycolate. The protein is Phosphoglycolate phosphatase of Methanosarcina acetivorans (strain ATCC 35395 / DSM 2834 / JCM 12185 / C2A).